The chain runs to 73 residues: Heterin-2 (73 aa).

The N-terminal stretch at 1-22 is a signal peptide; sequence MQYKTFLVIFLAYLLVTEEALA. A propeptide spanning residues 47 to 73 is cleaved from the precursor; the sequence is KRALKNIFDPYQKNLDLELERLLSQLQ.

Belongs to the non-disulfide-bridged peptide (NDBP) superfamily. Medium-length antimicrobial peptide (group 3) family. In terms of tissue distribution, expressed by the venom gland.

The protein localises to the secreted. Its subcellular location is the target cell membrane. Amphipathic peptide with potent activities against Gram-positive bacteria (MIC=5.6-30.0 uM) and weaker activities against the tested Gram-negative bacteria (MIC=15 uM to &gt;45 uM). It has high hemolytic activity against human erythrocytes. May act by disrupting the integrity of the bacterial cell membrane. The protein is Heterin-2 of Heterometrus spinifer (Asia giant forest scorpion).